A 386-amino-acid polypeptide reads, in one-letter code: Na(+)/H(+) antiporter NhaA (386 aa).

The next 11 membrane-spanning stretches (helical) occupy residues 11–31 (NDATGGVVLIVAAAFAMFLAN), 60–80 (LLLWINDALMALFFLMIGLEV), 96–116 (MFPLIAALGGMLAPGLIYAAF), 126–146 (GWAIPTATDIAFALGILALLG), 155–175 (MFLMALAVIDDLGAIVIIALF), 180–200 (LSLISLTVAAASIAVLAVLNG), 218–238 (VAVLKSGVHATLAGVIVGLFI), 260–280 (VSWLILPLFAFANAGISLSGV), 293–313 (ITLGLFIGKPLGITLICWLAV), 326–346 (LIDIAAVGVLCGIGFTMSIFI), and 358–378 (LVTLAKLGILSGSVISALVGY).

The protein belongs to the NhaA Na(+)/H(+) (TC 2.A.33) antiporter family.

The protein resides in the cell inner membrane. It catalyses the reaction Na(+)(in) + 2 H(+)(out) = Na(+)(out) + 2 H(+)(in). In terms of biological role, na(+)/H(+) antiporter that extrudes sodium in exchange for external protons. The protein is Na(+)/H(+) antiporter NhaA of Erwinia tasmaniensis (strain DSM 17950 / CFBP 7177 / CIP 109463 / NCPPB 4357 / Et1/99).